A 373-amino-acid chain; its full sequence is MVSPGLDLELSFSQALQGFGFSPEVARLLWLPLPMLLVLVAAVVGVLVSVWLERKISAAVQQRIGPEYAGALGVLQPLADGLKLLVKEDIIPARADSLLFTLGPVLVVVPVIISWLIIPFGQNLLISNVGVGIFLWISFSSIQPIGLLMSGYASNNKYSLLGGLRAAAQSISYEIPLALAVLAIVMMTNSLSTVDIVGQQTGAGILSWNIWRQPVGFLIFWICALAECERLPFDLPEAEEELVAGYQTEYAGMKFALFYLAGYINLVLSAVLVSVLYLGGWGFPIPVEWLAGWLNQPIDAPLVQVITGTVGIVMTVLKAYLLVFVAILLRWTTPRVRIDQLLDLGWKFLLPLSLVNLLVTAALKLAFPVAFGG.

A run of 8 helical transmembrane segments spans residues 28–48 (LLWL…GVLV), 98–118 (LLFT…WLII), 129–149 (VGVG…GLLM), 177–197 (LALA…VDIV), 205–225 (ILSW…ICAL), 267–287 (VLSA…PIPV), 309–329 (TVGI…AILL), and 348–368 (FLLP…LAFP).

This sequence belongs to the complex I subunit 1 family. NDH-1 is composed of at least 11 different subunits.

It is found in the cellular thylakoid membrane. The enzyme catalyses a plastoquinone + NADH + (n+1) H(+)(in) = a plastoquinol + NAD(+) + n H(+)(out). It carries out the reaction a plastoquinone + NADPH + (n+1) H(+)(in) = a plastoquinol + NADP(+) + n H(+)(out). NDH-1 shuttles electrons from an unknown electron donor, via FMN and iron-sulfur (Fe-S) centers, to quinones in the respiratory and/or the photosynthetic chain. The immediate electron acceptor for the enzyme in this species is believed to be plastoquinone. Couples the redox reaction to proton translocation, and thus conserves the redox energy in a proton gradient. The polypeptide is NAD(P)H-quinone oxidoreductase subunit 1 (Synechococcus sp. (strain CC9605)).